The sequence spans 359 residues: Putative plant UBX domain-containing protein 15 (359 aa).

Residues 277-357 form the UBX domain; sequence DRSVVCSISV…GIANSIISVT (81 aa).

The chain is Putative plant UBX domain-containing protein 15 from Arabidopsis thaliana (Mouse-ear cress).